The primary structure comprises 85 residues: Large ribosomal subunit protein bL27 (85 aa).

Residues 1–22 (MAHKKGQGSSRNGRDSPGQRRG) form a disordered region.

It belongs to the bacterial ribosomal protein bL27 family.

This chain is Large ribosomal subunit protein bL27, found in Anaeromyxobacter dehalogenans (strain 2CP-1 / ATCC BAA-258).